A 237-amino-acid chain; its full sequence is Ribosomal RNA small subunit methyltransferase G (237 aa).

S-adenosyl-L-methionine is bound by residues Gly-78, Phe-83, 129 to 130 (AE), and Arg-148.

Belongs to the methyltransferase superfamily. RNA methyltransferase RsmG family.

The protein resides in the cytoplasm. Its function is as follows. Specifically methylates the N7 position of a guanine in 16S rRNA. The polypeptide is Ribosomal RNA small subunit methyltransferase G (Streptococcus pyogenes serotype M2 (strain MGAS10270)).